The sequence spans 176 residues: uncharacterized protein (176 aa).

This is an uncharacterized protein from Methanocaldococcus jannaschii (strain ATCC 43067 / DSM 2661 / JAL-1 / JCM 10045 / NBRC 100440) (Methanococcus jannaschii).